The sequence spans 349 residues: Small ribosomal subunit biogenesis GTPase RsgA (349 aa).

The segment covering 1-11 (MSKKKLSKGQQ) has biased composition (basic residues). A disordered region spans residues 1–29 (MSKKKLSKGQQRRVSANHQRRLKKTESKV). One can recognise a CP-type G domain in the interval 102–272 (HSVLTRPDYY…VIDSPGVREF (171 aa)). GTP is bound by residues 158 to 161 (NKID) and 212 to 220 (GQSGVGKSS). The Zn(2+) site is built by cysteine 296, cysteine 301, histidine 303, and cysteine 309.

It belongs to the TRAFAC class YlqF/YawG GTPase family. RsgA subfamily. As to quaternary structure, monomer. Associates with 30S ribosomal subunit, binds 16S rRNA. The cofactor is Zn(2+).

Its subcellular location is the cytoplasm. Functionally, one of several proteins that assist in the late maturation steps of the functional core of the 30S ribosomal subunit. Helps release RbfA from mature subunits. May play a role in the assembly of ribosomal proteins into the subunit. Circularly permuted GTPase that catalyzes slow GTP hydrolysis, GTPase activity is stimulated by the 30S ribosomal subunit. This is Small ribosomal subunit biogenesis GTPase RsgA from Pectobacterium atrosepticum (strain SCRI 1043 / ATCC BAA-672) (Erwinia carotovora subsp. atroseptica).